Reading from the N-terminus, the 163-residue chain is Centrosomal protein of 19 kDa (163 aa).

It belongs to the CEP19 family. In terms of assembly, interacts with CEP43; this interaction is required for its localization to the mother centriole. Interacts (via residues 121-150) with RABL2B. Interacts (via C-terminus) with CEP350; this interaction is required for its localization to the mother centriole.

The protein localises to the cytoplasm. It localises to the cytoskeleton. It is found in the microtubule organizing center. The protein resides in the centrosome. Its subcellular location is the centriole. The protein localises to the spindle pole. It localises to the cilium basal body. Required for ciliation. Recruits the RABL2B GTPase to the ciliary base to initiate ciliation. After specifically capturing the activated GTP-bound RABL2B, the CEP19-RABL2B complex binds intraflagellar transport (IFT) complex B from the large pool pre-docked at the base of the cilium and thus triggers its entry into the cilia. Involved in the early steps in cilia formation by recruiting the ciliary vesicles (CVs) to the distal end of the mother centriole where they fuse to initiate cilium assembly. Involved in microtubule (MT) anchoring to the centrosomes. The chain is Centrosomal protein of 19 kDa (CEP19) from Homo sapiens (Human).